The sequence spans 117 residues: G antigen 12B/C/D/E (117 aa).

The interval 1 to 117 (MSWRGRSTYY…PEEGEKQSQC (117 aa)) is disordered. 2 stretches are compositionally biased toward acidic residues: residues 32-45 (FSDE…EEGE) and 87-96 (ECEDGPDGQE). Residues 103–117 (EEVKTPEEGEKQSQC) show a composition bias toward basic and acidic residues.

It belongs to the GAGE family.

This is G antigen 12B/C/D/E (GAGE12B) from Homo sapiens (Human).